We begin with the raw amino-acid sequence, 345 residues long: MSRIVNVKLSLKRYEYEKPFHITGSVSSESRNVEVEIVLESGVKGYGEASPSFRVNGERVEALLAIENAVREMITGIDVRNYARIFEITDRLFGFPSLKAAVQFATLDALSQELGTQVCYLLGGKRDEIETDKTVGIDTVENRVKEAKKIFEEGFRVIKIKVGENLKEDIEAVEEIAKVTRGAKYIVDANMGYTQKEAVEFARAVYQKGIDIAVYEQPVRREDIEGLKFVRFHSPFPVAADESARTKFDVMRLVKEEAVDYVNIKLMKSGISDALAIVEIAESSGLKLMIGCMGESSLGINQSVHFALGTGAFEFHDLDSHLMLKEEVFRGKFIQDGPRMRVKDQ.

Residues Thr134 and Lys159 each coordinate substrate. Lys161 (proton acceptor; specific for (R)-substrate epimerization) is an active-site residue. Residue Asp188 coordinates Mg(2+). Asn190 contributes to the substrate binding site. Mg(2+)-binding residues include Glu216 and Asp241. Catalysis depends on Lys265, which acts as the Proton acceptor; specific for (S)-substrate epimerization. Residues Cys292, Asp317, and Asp319 each contribute to the substrate site.

The protein belongs to the mandelate racemase/muconate lactonizing enzyme family. The cofactor is Mg(2+).

The catalysed reaction is L-alanyl-L-glutamate = L-alanyl-D-glutamate. It functions in the pathway cell wall degradation; peptidoglycan degradation. Catalyzes the epimerization of L-Ala-D-Glu to L-Ala-L-Glu and has probably a role in the metabolism of the murein peptide, of which L-Ala-D-Glu is a component. Is also able to catalyze the reverse reaction and the epimerization of a broad range of other dipeptides; is most efficient with L-Ala-D/L-Phe, L-Ala-D/L-Tyr, and L-Ala-D/L-His. This chain is L-Ala-D/L-Glu epimerase, found in Thermotoga maritima (strain ATCC 43589 / DSM 3109 / JCM 10099 / NBRC 100826 / MSB8).